Reading from the N-terminus, the 327-residue chain is DNA-directed RNA polymerase subunit alpha (327 aa).

The tract at residues 1–231 (MIYQMQMPAK…DHVTFFANFS (231 aa)) is alpha N-terminal domain (alpha-NTD). The interval 252–327 (MRRLFHTKIE…GMDITKYQMK (76 aa)) is alpha C-terminal domain (alpha-CTD).

This sequence belongs to the RNA polymerase alpha chain family. Homodimer. The RNAP catalytic core consists of 2 alpha, 1 beta, 1 beta' and 1 omega subunit. When a sigma factor is associated with the core the holoenzyme is formed, which can initiate transcription.

It carries out the reaction RNA(n) + a ribonucleoside 5'-triphosphate = RNA(n+1) + diphosphate. Its function is as follows. DNA-dependent RNA polymerase catalyzes the transcription of DNA into RNA using the four ribonucleoside triphosphates as substrates. The chain is DNA-directed RNA polymerase subunit alpha from Pelodictyon phaeoclathratiforme (strain DSM 5477 / BU-1).